The following is a 487-amino-acid chain: Neuronal immunoglobulin domain-containing protein rig-3 (487 aa).

The first 23 residues, 1-23 (MGRLLAKMLFPLAMCLFVSAVSA), serve as a signal peptide directing secretion. Ig-like domains are found at residues 34 to 139 (PIVI…KTIK) and 247 to 354 (PEFE…PKVT). 2 disulfides stabilise this stretch: Cys-61–Cys-124 and Cys-271–Cys-327. Asp-466 carries the GPI-anchor amidated aspartate lipid modification. Positions 467-487 (SASDSKFPLALATLFFVCLFI) are cleaved as a propeptide — removed in mature form.

In terms of tissue distribution, expressed in the cholinergic motor neurons AS, VA and DA in the ventral nerve cord and in the mechanosensory ALM neurons in the midbody.

The protein resides in the cell projection. It localises to the axon. It is found in the synapse. Its subcellular location is the cell membrane. Its function is as follows. Cell surface protein which plays a role in the plasticity of cholinergic synapses at neuromuscular junctions and in the polarity of the mechanosensory neuron ALM, possibly by antagonizing Wnt signaling. The chain is Neuronal immunoglobulin domain-containing protein rig-3 from Caenorhabditis elegans.